Here is a 285-residue protein sequence, read N- to C-terminus: Pantothenate synthetase (285 aa).

30–37 (MGNLHDGH) contacts ATP. Catalysis depends on His37, which acts as the Proton donor. Gln61 contributes to the (R)-pantoate binding site. Gln61 contacts beta-alanine. 149-152 (GEKD) contributes to the ATP binding site. Gln155 serves as a coordination point for (R)-pantoate. ATP-binding positions include Ile178 and 186-189 (LSSR).

It belongs to the pantothenate synthetase family. As to quaternary structure, homodimer.

It is found in the cytoplasm. The catalysed reaction is (R)-pantoate + beta-alanine + ATP = (R)-pantothenate + AMP + diphosphate + H(+). The protein operates within cofactor biosynthesis; (R)-pantothenate biosynthesis; (R)-pantothenate from (R)-pantoate and beta-alanine: step 1/1. Functionally, catalyzes the condensation of pantoate with beta-alanine in an ATP-dependent reaction via a pantoyl-adenylate intermediate. This Buchnera aphidicola subsp. Acyrthosiphon pisum (strain 5A) protein is Pantothenate synthetase.